Here is a 268-residue protein sequence, read N- to C-terminus: Tryptophan synthase alpha chain (268 aa).

Residues E47 and D58 each act as proton acceptor in the active site.

Belongs to the TrpA family. As to quaternary structure, tetramer of two alpha and two beta chains.

The catalysed reaction is (1S,2R)-1-C-(indol-3-yl)glycerol 3-phosphate + L-serine = D-glyceraldehyde 3-phosphate + L-tryptophan + H2O. Its pathway is amino-acid biosynthesis; L-tryptophan biosynthesis; L-tryptophan from chorismate: step 5/5. Functionally, the alpha subunit is responsible for the aldol cleavage of indoleglycerol phosphate to indole and glyceraldehyde 3-phosphate. This chain is Tryptophan synthase alpha chain, found in Chlorobium phaeobacteroides (strain BS1).